Consider the following 346-residue polypeptide: DNA ligase (346 aa).

Residues 32–35, Arg-39, 55–57, Glu-93, Glu-142, and Arg-149 contribute to the ATP site; these read DCKY and RVS. The active-site N6-AMP-lysine intermediate is the Lys-34. Glu-223 provides a ligand contact to a divalent metal cation. ATP is bound by residues Lys-238 and Lys-244.

It belongs to the ATP-dependent DNA ligase family. Requires a divalent metal cation as cofactor.

It carries out the reaction ATP + (deoxyribonucleotide)n-3'-hydroxyl + 5'-phospho-(deoxyribonucleotide)m = (deoxyribonucleotide)n+m + AMP + diphosphate.. Its function is as follows. DNA ligase, which is expressed in the early stage of lytic development, has been implicated in T7 DNA synthesis and genetic recombination. It may also play a role in T7 DNA repair. This is DNA ligase (1.3) from Enterobacteria phage T3 (Bacteriophage T3).